A 134-amino-acid polypeptide reads, in one-letter code: Profilin-2 (134 aa).

An intrachain disulfide couples Cys-13 to Cys-118. The short motif at 84–100 (AVIRGKKGSGGITIKKT) is the Involved in PIP2 interaction element. A Phosphothreonine modification is found at Thr-114.

The protein belongs to the profilin family. Occurs in many kinds of cells as a complex with monomeric actin in a 1:1 ratio. In terms of processing, phosphorylated by MAP kinases.

Its subcellular location is the cytoplasm. The protein resides in the cytoskeleton. Its function is as follows. Binds to actin and affects the structure of the cytoskeleton. At high concentrations, profilin prevents the polymerization of actin, whereas it enhances it at low concentrations. The protein is Profilin-2 of Olea europaea (Common olive).